Reading from the N-terminus, the 538-residue chain is CWF19-like protein 1 (538 aa).

The tract at residues 298-324 is disordered; the sequence is QGRKRSSTGRDSKSSPHPKQPRKPPQP.

It belongs to the CWF19 family. Expressed in many brain regions, including cerebellum, thalamus and occipital, parietal and temporal lobes (at protein level). Also expressed in the spinal cord (at protein level).

The protein is CWF19-like protein 1 (CWF19L1) of Homo sapiens (Human).